We begin with the raw amino-acid sequence, 2530 residues long: Agglutinin-like protein 2 (2530 aa).

A signal peptide spans 1–17; sequence MLLQFLLLSLCVSVATA. 4 disulfide bridges follow: Cys73–Cys150, Cys96–Cys112, Cys205–Cys297, and Cys227–Cys256. Asn253 and Asn315 each carry an N-linked (GlcNAc...) asparagine glycan. ALS repeat units lie at residues 364–395, 400–431, 437–468, 473–504, 509–540, and 545–576; these read TTIT…VDVP, TTVT…VQVP, and VTTT…IREP. Asn578 carries N-linked (GlcNAc...) asparagine glycosylation. An ALS 7 repeat occupies 581-612; sequence VTTTEYWSQSYVTTSTITAPPGGTDTVIIREP. Asn614 carries an N-linked (GlcNAc...) asparagine glycan. ALS repeat units lie at residues 617 to 648, 653 to 684, 689 to 720, 725 to 756, 761 to 792, 797 to 828, and 833 to 864; these read VTTT…IREP. A glycan (N-linked (GlcNAc...) asparagine) is linked at Asn866. ALS repeat units lie at residues 869–900, 905–936, 941–972, and 977–1008; these read VTTT…IREP. The span at 954 to 967 shows a compositional bias: low complexity; the sequence is TTTVTGPPGGTDTV. The disordered stretch occupies residues 954-975; sequence TTTVTGPPGGTDTVIIREPPNP. A glycan (N-linked (GlcNAc...) asparagine) is linked at Asn1010. ALS repeat units lie at residues 1013 to 1044, 1049 to 1077, 1085 to 1116, and 1121 to 1152; these read VTTT…IREP and VTTT…TVII. A glycan (N-linked (GlcNAc...) asparagine) is linked at Asn1154. ALS repeat units lie at residues 1157–1188, 1193–1224, 1229–1260, 1265–1296, 1301–1332, and 1337–1368; these read VTTT…IREP. An N-linked (GlcNAc...) asparagine glycan is attached at Asn1370. The stretch at 1373–1404 is one ALS 29 repeat; the sequence is VTTTEYWSQSYATTTTVTAPPGGTATVIIREP. Asn1406 is a glycosylation site (N-linked (GlcNAc...) asparagine). Residues 1409–1440 form an ALS 30 repeat; it reads VTTTEYWSQSYATTTTITAPPGDTDTVIIREP. N-linked (GlcNAc...) asparagine glycosylation is present at Asn1442. ALS repeat units follow at residues 1445–1476 and 1481–1512; these read VTTT…IREP. Asn1514 carries N-linked (GlcNAc...) asparagine glycosylation. The stretch at 1517–1548 is one ALS 33 repeat; the sequence is VTTTEYWSQSYATTTTVTAPPGGTATVIIREP. Asn1550 is a glycosylation site (N-linked (GlcNAc...) asparagine). An ALS 34 repeat occupies 1553-1584; that stretch reads VTTTEYWSQSYATTTTITAPPGDTDTVIIREP. The N-linked (GlcNAc...) asparagine glycan is linked to Asn1586. One copy of the ALS 35 repeat lies at 1589–1620; the sequence is VTTTEYWSQSYATTTTVTAPPGGTDTVIIREP. N-linked (GlcNAc...) asparagine glycosylation is present at Asn1622. Residues 1625-1656 form an ALS 36 repeat; the sequence is VTTTEYWSQSYATTTTVTAPPGGTATVIIREP. An N-linked (GlcNAc...) asparagine glycan is attached at Asn1658. ALS repeat units follow at residues 1661–1692 and 1697–1728; these read VTTT…IREP. N-linked (GlcNAc...) asparagine glycosylation occurs at Asn1730. The ALS 39 repeat unit spans residues 1733–1764; the sequence is VTTTEYWSQSYATTTTVTAPPGGTDTVIIREP. Asn1766 is a glycosylation site (N-linked (GlcNAc...) asparagine). 2 ALS repeats span residues 1769–1800 and 1805–1836; these read VTTT…IREP. Residue Asn1838 is glycosylated (N-linked (GlcNAc...) asparagine). ALS repeat units lie at residues 1841–1872 and 1877–1907; these read VTTT…IREP and VTTT…RIRE. Asn1910 is a glycosylation site (N-linked (GlcNAc...) asparagine). 2 ALS repeats span residues 1913-1944 and 1949-1980; these read VTTT…IREP. Asn1982 carries N-linked (GlcNAc...) asparagine glycosylation. ALS repeat units follow at residues 1985–2016, 2021–2052, and 2057–2088; these read VTTT…IREP. N-linked (GlcNAc...) asparagine glycosylation occurs at Asn2090. ALS repeat units follow at residues 2093–2124 and 2129–2157; these read VTTT…IREP and VTTT…SVII. The N-linked (GlcNAc...) asparagine glycan is linked to Asn2197. 2 disordered regions span residues 2200 to 2235 and 2274 to 2494; these read VTHL…GSEN and TTII…QQTT. The span at 2204-2233 shows a compositional bias: low complexity; sequence PSSSSKPVDIPSSDVVTSTNDNSLTSLTGS. A glycan (N-linked (GlcNAc...) asparagine) is linked at Asn2281. Residues 2282 to 2296 are compositionally biased toward low complexity; sequence GSGKSKSGELSSTGS. 2 stretches are compositionally biased toward polar residues: residues 2329–2420 and 2429–2452; these read STET…SATA and NGAT…TTNI. N-linked (GlcNAc...) asparagine glycosylation is found at Asn2444 and Asn2466. 2 stretches are compositionally biased toward low complexity: residues 2453-2471 and 2482-2494; these read QGGN…TGEP and SISQ…QQTT. Asp2507 is lipidated: GPI-anchor amidated aspartate. The propeptide at 2508–2530 is removed in mature form; it reads GSGSIVQHSGWLYVLLTAISIFF.

This sequence belongs to the ALS family. Post-translationally, N-glycosylated and O-glycosylated. The GPI-anchor is attached to the protein in the endoplasmic reticulum and serves to target the protein to the cell surface. There, the glucosamine-inositol phospholipid moiety is cleaved off and the GPI-modified mannoprotein is covalently attached via its lipidless GPI glycan remnant to the 1,6-beta-glucan of the outer cell wall layer.

It is found in the cell membrane. The protein localises to the secreted. The protein resides in the cell wall. Cell surface adhesion protein which mediates both yeast-to-host tissue adherence and yeast aggregation. Plays an important role in the pathogenesis of C.albicans infections. This is Agglutinin-like protein 2 (ALS2) from Candida albicans (strain SC5314 / ATCC MYA-2876) (Yeast).